We begin with the raw amino-acid sequence, 296 residues long: 4-diphosphocytidyl-2-C-methyl-D-erythritol kinase (296 aa).

The active site involves Lys-13. 104-114 (PMGGGIGGGSS) lines the ATP pocket. Asp-146 is a catalytic residue.

The protein belongs to the GHMP kinase family. IspE subfamily.

The enzyme catalyses 4-CDP-2-C-methyl-D-erythritol + ATP = 4-CDP-2-C-methyl-D-erythritol 2-phosphate + ADP + H(+). It participates in isoprenoid biosynthesis; isopentenyl diphosphate biosynthesis via DXP pathway; isopentenyl diphosphate from 1-deoxy-D-xylulose 5-phosphate: step 3/6. Functionally, catalyzes the phosphorylation of the position 2 hydroxy group of 4-diphosphocytidyl-2C-methyl-D-erythritol. This chain is 4-diphosphocytidyl-2-C-methyl-D-erythritol kinase, found in Hahella chejuensis (strain KCTC 2396).